The following is a 393-amino-acid chain: S-adenosylmethionine synthase (393 aa).

H16 provides a ligand contact to ATP. D18 provides a ligand contact to Mg(2+). A K(+)-binding site is contributed by E44. L-methionine-binding residues include E57 and Q100. A flexible loop region spans residues 100-110; it reads QSNDIAQGVDH. ATP-binding positions include 167–169, 238–239, D247, 253–254, A270, and K274; these read DAK, RF, and RK. L-methionine is bound at residue D247. Residue K278 participates in L-methionine binding.

Belongs to the AdoMet synthase family. In terms of assembly, homotetramer; dimer of dimers. Mg(2+) serves as cofactor. K(+) is required as a cofactor.

Its subcellular location is the cytoplasm. It catalyses the reaction L-methionine + ATP + H2O = S-adenosyl-L-methionine + phosphate + diphosphate. It participates in amino-acid biosynthesis; S-adenosyl-L-methionine biosynthesis; S-adenosyl-L-methionine from L-methionine: step 1/1. Its function is as follows. Catalyzes the formation of S-adenosylmethionine (AdoMet) from methionine and ATP. The overall synthetic reaction is composed of two sequential steps, AdoMet formation and the subsequent tripolyphosphate hydrolysis which occurs prior to release of AdoMet from the enzyme. This Albidiferax ferrireducens (strain ATCC BAA-621 / DSM 15236 / T118) (Rhodoferax ferrireducens) protein is S-adenosylmethionine synthase.